A 230-amino-acid chain; its full sequence is MSDVAAFTAYPVIAIDGPTASGKGTVAHQIADLLGFHYLDSGSLYRLVAFVSIRENIDDHDVNSLVRIASELDVRFKADHIWLKGEDVSLALRHESVGNQASAIAVHGPVREALRARQRAFLEAPGLVADGRDMGTVIFPEAVLKVFLTASVQARAERRYKQLIAKGFSATVESLSRDLEARDLRDRTRSVAPLRPAEAARLLDSSDMSVDEVVAQVLDWYRQVQGVKAR.

17–25 is a binding site for ATP; the sequence is GPTASGKGT.

The protein belongs to the cytidylate kinase family. Type 1 subfamily.

It localises to the cytoplasm. It carries out the reaction CMP + ATP = CDP + ADP. The catalysed reaction is dCMP + ATP = dCDP + ADP. The sequence is that of Cytidylate kinase from Ralstonia nicotianae (strain ATCC BAA-1114 / GMI1000) (Ralstonia solanacearum).